The following is a 40-amino-acid chain: Photosystem II reaction center protein J (40 aa).

The helical transmembrane segment at 8–28 threads the bilayer; it reads IPLWIIGTVTGILVIGLVGIF.

It belongs to the PsbJ family. As to quaternary structure, PSII is composed of 1 copy each of membrane proteins PsbA, PsbB, PsbC, PsbD, PsbE, PsbF, PsbH, PsbI, PsbJ, PsbK, PsbL, PsbM, PsbT, PsbX, PsbY, PsbZ, Psb30/Ycf12, at least 3 peripheral proteins of the oxygen-evolving complex and a large number of cofactors. It forms dimeric complexes.

The protein localises to the plastid. It is found in the chloroplast thylakoid membrane. In terms of biological role, one of the components of the core complex of photosystem II (PSII). PSII is a light-driven water:plastoquinone oxidoreductase that uses light energy to abstract electrons from H(2)O, generating O(2) and a proton gradient subsequently used for ATP formation. It consists of a core antenna complex that captures photons, and an electron transfer chain that converts photonic excitation into a charge separation. The chain is Photosystem II reaction center protein J from Jasminum nudiflorum (Winter jasmine).